The sequence spans 67 residues: Large ribosomal subunit protein bL32 (67 aa).

A compositionally biased stretch (basic residues) spans 1–20 (MAVPKRKMSRSNTRARRAKW). The tract at residues 1–24 (MAVPKRKMSRSNTRARRAKWKATA) is disordered.

Belongs to the bacterial ribosomal protein bL32 family.

The chain is Large ribosomal subunit protein bL32 from Renibacterium salmoninarum (strain ATCC 33209 / DSM 20767 / JCM 11484 / NBRC 15589 / NCIMB 2235).